The primary structure comprises 506 residues: Notoamide biosynthesis cluster transcriptional coactivator notQ' (506 aa).

The segment at residues 11 to 38 (CLVCRHRKVACDRGRPQCGLCRKNGFDC) is a DNA-binding region (zn(2)-C6 fungal-type). A disordered region spans residues 73–102 (GRLSQSQPSQPATERDDLATTPSTGRLAPP). Positions 75-84 (LSQSQPSQPA) are enriched in polar residues.

The protein localises to the nucleus. In terms of biological role, transcription factor that probably regulates the expression of the gene cluster that mediates the biosynthesis of notoamide, a fungal indole alkaloid that belongs to a family of natural products containing a characteristic bicyclo[2.2.2]diazaoctane core. This chain is Notoamide biosynthesis cluster transcriptional coactivator notQ', found in Aspergillus versicolor.